Here is a 318-residue protein sequence, read N- to C-terminus: NADH-ubiquinone oxidoreductase chain 1 (318 aa).

Helical transmembrane passes span Phe-2–Leu-22, Met-70–Pro-90, Leu-100–Gly-120, Ala-147–Ile-167, Tyr-171–Ala-191, Ala-217–Phe-237, Leu-254–Ser-276, and Leu-294–Ile-314.

The protein belongs to the complex I subunit 1 family. As to quaternary structure, core subunit of respiratory chain NADH dehydrogenase (Complex I) which is composed of 45 different subunits.

It is found in the mitochondrion inner membrane. The catalysed reaction is a ubiquinone + NADH + 5 H(+)(in) = a ubiquinol + NAD(+) + 4 H(+)(out). In terms of biological role, core subunit of the mitochondrial membrane respiratory chain NADH dehydrogenase (Complex I) which catalyzes electron transfer from NADH through the respiratory chain, using ubiquinone as an electron acceptor. Essential for the catalytic activity and assembly of complex I. The sequence is that of NADH-ubiquinone oxidoreductase chain 1 (MT-ND1) from Equus asinus (Donkey).